We begin with the raw amino-acid sequence, 377 residues long: MVNATLSVVQKNSAFVGSATGELAARAIGMLYPGVKQSDLSEEQKQTISTLATVSAGLAGGLTGSSTASAAVGAQSGKNAVENNYLSTNQSLTFDKELSDCRKSGGNCQDIIDKWEKISDEQSAEIDQKLKDNPLEAQVIDKEVAKGGYDMTQRPGWLGNIGVEVMTSDEAKAYVQKWNGRDLTKIDVNSPEWTKFAVFASDPENQAMLVSGGLLVKDITKAAISFMSRNTATATVNASEVGMQWGQGNMKQGMPWEDYVGKSLPADARLPKNFKIFDYYDGATKTATSVKSIDTQTMAKLANPNQVYSSIKGNIDAAAKFKEYALSGRELTSSMISNREIQLAIPADTTKTQWAEINRAIEYGKSQGVKVTVTQVK.

Positions 81–84 match the VENN CT cleavage motif motif; the sequence is VENN. The inner membrane translocation domain (IMTD), targets to YciB stretch occupies residues 85-233; the sequence is YLSTNQSLTF…ISFMSRNTAT (149 aa). Residues 88–377 form a CT domain, sufficient to interact with CdiI region; that stretch reads TNQSLTFDKE…GVKVTVTQVK (290 aa). Residues 222 to 377 are has DNase activity in vivo, cannot be expressed in the absence of CdiI; it reads AAISFMSRNT…GVKVTVTQVK (156 aa). Residues Glu-257, Asp-278, Ser-289, and Lys-291 contribute to the active site. Zn(2+) is bound by residues Glu-257 and Asp-278.

In terms of assembly, interacts with cognate immunity protein CdiI-o11-EC869, which blocks its toxic DNase activity. Zn(2+) serves as cofactor.

Its subcellular location is the target cell. The protein localises to the target cell cytoplasm. Toxic component of a toxin-immunity protein module, which functions as a cellular contact-dependent growth inhibition (CDI) system. CDI modules allow bacteria to communicate with and inhibit the growth of closely related neighboring bacteria in a contact-dependent fashion. The C-terminal 289 residues (the CT fragment) has a strong DNase activity in the presence of Zn(2+), completely degrading supercoiled and linear plasmids, and inhibits growth. In the presence of Mg(2+) it nicks dsDNA. Toxic activity is neutralized by coexpression of the cognate immunity protein CdiI-o11-EC869, but not by non-cognate immunity proteins from other toxin-immunity modules or other strains of E.coli. Gains access to the cytoplasm of target cells by using integral inner membrane protein YciB. Its function is as follows. Expression of this locus confers protection against other bacteria carrying the locus. The chain is Deoxyribonuclease CdiA-o11 (cdiA4) from Escherichia coli O157:H7 (strain EC869).